The chain runs to 861 residues: Leucine--tRNA ligase (861 aa).

The 'HIGH' region motif lies at 42–52 (PYPSGKLHMGH). Positions 620–624 (KMSKS) match the 'KMSKS' region motif. Position 623 (K623) interacts with ATP.

The protein belongs to the class-I aminoacyl-tRNA synthetase family.

The protein localises to the cytoplasm. The catalysed reaction is tRNA(Leu) + L-leucine + ATP = L-leucyl-tRNA(Leu) + AMP + diphosphate. This Marinobacter nauticus (strain ATCC 700491 / DSM 11845 / VT8) (Marinobacter aquaeolei) protein is Leucine--tRNA ligase.